Reading from the N-terminus, the 104-residue chain is MVSGMSTEEEKEGTNDEEVSEEREVEETSEEEFPKLSIQDIELLMKNTEIWDNLLNGKISVDEAKRLFEDNYKDYEKRDSRRKAKKAASKKVKKTKKKEKSVEG.

Disordered regions lie at residues 1–34 (MVSGMSTEEEKEGTNDEEVSEEREVEETSEEEFP) and 76–104 (EKRDSRRKAKKAASKKVKKTKKKEKSVEG). Residues 7–31 (TEEEKEGTNDEEVSEEREVEETSEE) show a composition bias toward acidic residues. Glu32 contributes to the DNA binding site. The segment covering 80–104 (SRRKAKKAASKKVKKTKKKEKSVEG) has biased composition (basic residues). Residues 81–104 (RRKAKKAASKKVKKTKKKEKSVEG) form a required to bind DNA region.

This sequence belongs to the archaeal Rpo13 RNA polymerase subunit family. Part of the 13-subunit RNA polymerase complex. Rpo1N and Rpo5 form a cleft which docks Rpo13. Forms predominantly dimers in solution, although monomers and trimers can also be seen. Found associated with RNAP but also as a homodimer pool in the cytoplasm in vivo.

The protein resides in the cytoplasm. It catalyses the reaction RNA(n) + a ribonucleoside 5'-triphosphate = RNA(n+1) + diphosphate. DNA-dependent RNA polymerase (RNAP) catalyzes the transcription of DNA into RNA using the four ribonucleoside triphosphates as substrates. A molten-globule protein, it binds dsDNA in the RNAP, in vitro binds dsDNA but not ssDNA. Its position in RNAP implies it functions in both transcription initiation and elongation. The sequence is that of DNA-directed RNA polymerase subunit Rpo13 from Saccharolobus shibatae (strain ATCC 51178 / DSM 5389 / JCM 8931 / NBRC 15437 / B12) (Sulfolobus shibatae).